A 571-amino-acid polypeptide reads, in one-letter code: Urease subunit alpha (571 aa).

Positions 133–571 (GGIDTHVHFI…LPLTQRYFLF (439 aa)) constitute a Urease domain. Residues His138, His140, and Lys221 each coordinate Ni(2+). Lys221 carries the N6-carboxylysine modification. Residue His223 participates in substrate binding. Ni(2+) contacts are provided by His250 and His276. Residue His324 is the Proton donor of the active site. Asp364 is a binding site for Ni(2+).

Belongs to the metallo-dependent hydrolases superfamily. Urease alpha subunit family. Heterotrimer of UreA (gamma), UreB (beta) and UreC (alpha) subunits. Three heterotrimers associate to form the active enzyme. The cofactor is Ni cation. In terms of processing, carboxylation allows a single lysine to coordinate two nickel ions.

It localises to the cytoplasm. The enzyme catalyses urea + 2 H2O + H(+) = hydrogencarbonate + 2 NH4(+). The protein operates within nitrogen metabolism; urea degradation; CO(2) and NH(3) from urea (urease route): step 1/1. The sequence is that of Urease subunit alpha from Staphylococcus aureus (strain bovine RF122 / ET3-1).